We begin with the raw amino-acid sequence, 262 residues long: Glucosamine-6-phosphate deaminase (262 aa).

Residue Asp-63 is the Proton acceptor; for enolization step of the active site. Catalysis depends on Asn-129, which acts as the For ring-opening step. His-131 acts as the Proton acceptor; for ring-opening step in catalysis. The active-site For ring-opening step is the Glu-136.

It belongs to the glucosamine/galactosamine-6-phosphate isomerase family. NagB subfamily.

The catalysed reaction is alpha-D-glucosamine 6-phosphate + H2O = beta-D-fructose 6-phosphate + NH4(+). It functions in the pathway amino-sugar metabolism; N-acetylneuraminate degradation; D-fructose 6-phosphate from N-acetylneuraminate: step 5/5. Catalyzes the reversible isomerization-deamination of glucosamine 6-phosphate (GlcN6P) to form fructose 6-phosphate (Fru6P) and ammonium ion. This is Glucosamine-6-phosphate deaminase from Bacillus cereus (strain G9842).